The following is a 503-amino-acid chain: Cytochrome P450 7A1 (503 aa).

Residues 4-24 (ISLIWGIAVLVSCCIWFIVGI) traverse the membrane as a helical segment. Heme is bound at residue Cys444.

The protein belongs to the cytochrome P450 family. The cofactor is heme. As to expression, detected in liver (at protein level). Liver.

The protein localises to the endoplasmic reticulum membrane. It localises to the microsome membrane. The enzyme catalyses cholesterol + reduced [NADPH--hemoprotein reductase] + O2 = 7alpha-hydroxycholesterol + oxidized [NADPH--hemoprotein reductase] + H2O + H(+). It catalyses the reaction 4beta-hydroxycholesterol + reduced [NADPH--hemoprotein reductase] + O2 = 4beta,7alpha-dihydroxycholesterol + oxidized [NADPH--hemoprotein reductase] + H2O + H(+). It carries out the reaction lathosterol + reduced [NADPH--hemoprotein reductase] + O2 = 7alpha,8alpha-epoxy-5alpha-cholestan-3beta-ol + oxidized [NADPH--hemoprotein reductase] + H2O + H(+). The catalysed reaction is lathosterol + reduced [NADPH--hemoprotein reductase] + O2 = 5alpha-cholestan-7-oxo-3beta-ol + oxidized [NADPH--hemoprotein reductase] + H2O + H(+). The enzyme catalyses 7-dehydrocholesterol + reduced [NADPH--hemoprotein reductase] + O2 = 7-oxocholesterol + oxidized [NADPH--hemoprotein reductase] + H2O + H(+). It catalyses the reaction (24S)-hydroxycholesterol + reduced [NADPH--hemoprotein reductase] + O2 = (24S)-7alpha-dihydroxycholesterol + oxidized [NADPH--hemoprotein reductase] + H2O + H(+). It carries out the reaction (24R)-hydroxycholesterol + reduced [NADPH--hemoprotein reductase] + O2 = (24R)-7alpha-dihydroxycholesterol + oxidized [NADPH--hemoprotein reductase] + H2O + H(+). The protein operates within lipid metabolism; bile acid biosynthesis. Its pathway is steroid metabolism; cholesterol degradation. A cytochrome P450 monooxygenase involved in the metabolism of endogenous cholesterol and its oxygenated derivatives (oxysterols). Mechanistically, uses molecular oxygen inserting one oxygen atom into a substrate, and reducing the second into a water molecule, with two electrons provided by NADPH via cytochrome P450 reductase (CPR; NADPH-ferrihemoprotein reductase). Functions as a critical regulatory enzyme of bile acid biosynthesis and cholesterol homeostasis. Catalyzes the hydroxylation of carbon hydrogen bond at 7-alpha position of cholesterol, a rate-limiting step in cholesterol catabolism and bile acid biosynthesis. 7-alpha hydroxylates several oxysterols, including 4beta-hydroxycholesterol and 24-hydroxycholesterol. Catalyzes the oxidation of the 7,8 double bond of 7-dehydrocholesterol and lathosterol with direct and predominant formation of the 7-keto derivatives. The polypeptide is Cytochrome P450 7A1 (Cyp7a1) (Rattus norvegicus (Rat)).